Reading from the N-terminus, the 359-residue chain is Biotin synthase (359 aa).

Residues 1 to 22 are disordered; sequence MQSTPLNFVPNAAKAPVTPGQA. A Radical SAM core domain is found at 58 to 285; the sequence is NAVQLSTLLS…KAMVRLSAGR (228 aa). Positions 73, 77, and 80 each coordinate [4Fe-4S] cluster. 4 residues coordinate [2Fe-2S] cluster: Cys117, Cys148, Cys208, and Arg280.

It belongs to the radical SAM superfamily. Biotin synthase family. In terms of assembly, homodimer. Requires [4Fe-4S] cluster as cofactor. It depends on [2Fe-2S] cluster as a cofactor.

The enzyme catalyses (4R,5S)-dethiobiotin + (sulfur carrier)-SH + 2 reduced [2Fe-2S]-[ferredoxin] + 2 S-adenosyl-L-methionine = (sulfur carrier)-H + biotin + 2 5'-deoxyadenosine + 2 L-methionine + 2 oxidized [2Fe-2S]-[ferredoxin]. It functions in the pathway cofactor biosynthesis; biotin biosynthesis; biotin from 7,8-diaminononanoate: step 2/2. Catalyzes the conversion of dethiobiotin (DTB) to biotin by the insertion of a sulfur atom into dethiobiotin via a radical-based mechanism. The protein is Biotin synthase of Ralstonia pickettii (strain 12J).